The sequence spans 840 residues: Putative pentatricopeptide repeat-containing protein At1g31840 (840 aa).

PPR repeat units lie at residues lysine 98–asparagine 128, aspartate 145–isoleucine 179, proline 180–proline 214, glycine 216–valine 250, glycine 251–proline 284, asparagine 285–proline 319, aspartate 320–leucine 354, aspartate 355–proline 389, asparagine 390–proline 424, serine 425–proline 459, aspartate 460–leucine 494, asparagine 495–proline 529, aspartate 530–proline 564, aspartate 565–alanine 599, aspartate 600–proline 634, aspartate 635–proline 669, asparagine 670–proline 704, asparagine 705–proline 739, serine 740–proline 774, and aspartate 775–proline 809.

This sequence belongs to the PPR family. P subfamily.

The protein is Putative pentatricopeptide repeat-containing protein At1g31840 of Arabidopsis thaliana (Mouse-ear cress).